A 141-amino-acid chain; its full sequence is Large ribosomal subunit protein uL16 (141 aa).

It belongs to the universal ribosomal protein uL16 family. As to quaternary structure, part of the 50S ribosomal subunit.

In terms of biological role, binds 23S rRNA and is also seen to make contacts with the A and possibly P site tRNAs. This is Large ribosomal subunit protein uL16 from Geobacillus thermodenitrificans (strain NG80-2).